A 303-amino-acid polypeptide reads, in one-letter code: L(+)-tartrate dehydratase subunit alpha (303 aa).

Iron-sulfur cluster is bound by residues Cys71, Cys190, and Cys277.

This sequence belongs to the class-I fumarase family. Tetramer of two alpha and two beta subunits. It depends on iron-sulfur cluster as a cofactor.

It catalyses the reaction (2R,3R)-tartrate = oxaloacetate + H2O. This chain is L(+)-tartrate dehydratase subunit alpha (ttdA), found in Escherichia coli O157:H7.